The chain runs to 598 residues: MVNEVPTLKKKIIFKYFKPLLTFTKKEDPYELRVKSAPPLNIIEERKEPKKFVLCKPDGTPITLDDLSDISDSEEEEDTKLDMKDSIKEDVKDSIKEDVKDSSKEDVKDDVIEDVKGSINEEINSTCGTCSFINLKREKILNELLEMYRVEESVPYSFVPTNVPQIMYSVGEILNCINKIPFTLKLLKKDVNKIPVNYKEFKINKETIIEKATFELNKLTNTNIKRIITNLKNLNIETIQQAKYLGNLIVFKAINEPQYCNLYAMVVGALKKDFKSKEELGLHKKQTAFFGTVLTSAMKVLEEKVEWADTKVLDKNLYKNAFEYERAFEEQETERYLRKKKTLGAVNLLCDLYNLDVITLKHIQSRLNEFLNIENEEVVEVLGKFIEKIGEKMYLNDKSDYANMICSYLDACKNKYSNRVKFYIMDVLDKKKNWKKPVSKTENLFSSLIMEDEPALDTPYQYQEQVIANEEEEDSLELLKTIDNIYQDLKDAYDEEDEIMIADNFKIASNTFGKISFFSTYFSECITNSRKSKLLVPFVINFFNETNLNESELFDIINKHKEKLNELKIDFPLSQKIMSLYVINFVVDRLSKKIHMIN.

The disordered stretch occupies residues 65–86 (DDLSDISDSEEEEDTKLDMKDS). Over residues 66-79 (DLSDISDSEEEEDT) the composition is skewed to acidic residues. An MIF4G domain is found at 209–434 (IEKATFELNK…MDVLDKKKNW (226 aa)).

It belongs to the eukaryotic initiation factor 4G family. In terms of assembly, component of the eIF4F complex, which composition varies with external and internal environmental conditions.

It localises to the cytoplasm. Its function is as follows. Component of the protein complex eIF4F, which is involved in the recognition of the mRNA cap, ATP-dependent unwinding of 5'-terminal secondary structure and recruitment of mRNA to the ribosome. In Vairimorpha ceranae (strain BRL01) (Microsporidian parasite), this protein is Probable eukaryotic translation initiation factor 4 gamma homolog (EIF4G).